The primary structure comprises 151 residues: Flagellar assembly factor FliW (151 aa).

It belongs to the FliW family. Interacts with translational regulator CsrA and flagellin(s).

It localises to the cytoplasm. In terms of biological role, acts as an anti-CsrA protein, binds CsrA and prevents it from repressing translation of its target genes, one of which is flagellin. Binds to flagellin and participates in the assembly of the flagellum. The chain is Flagellar assembly factor FliW from Lachnospira eligens (strain ATCC 27750 / DSM 3376 / VPI C15-48 / C15-B4) (Eubacterium eligens).